The following is a 383-amino-acid chain: N-acetyldiaminopimelate deacetylase (383 aa).

Asp72 is a catalytic residue. The Proton acceptor role is filled by Glu131.

This sequence belongs to the peptidase M20A family. N-acetyldiaminopimelate deacetylase subfamily.

It carries out the reaction N-acetyl-(2S,6S)-2,6-diaminopimelate + H2O = (2S,6S)-2,6-diaminopimelate + acetate. The protein operates within amino-acid biosynthesis; L-lysine biosynthesis via DAP pathway; LL-2,6-diaminopimelate from (S)-tetrahydrodipicolinate (acetylase route): step 3/3. Catalyzes the conversion of N-acetyl-diaminopimelate to diaminopimelate and acetate. This chain is N-acetyldiaminopimelate deacetylase, found in Lacticaseibacillus paracasei (strain ATCC 334 / BCRC 17002 / CCUG 31169 / CIP 107868 / KCTC 3260 / NRRL B-441) (Lactobacillus paracasei).